A 426-amino-acid chain; its full sequence is Riboflavin biosynthesis protein PYRD, chloroplastic (426 aa).

The transit peptide at 1 to 61 (MQISCLPISI…SQTGFSNPVL (61 aa)) directs the protein to the chloroplast. Residues 72–194 (VDDSFYMRKC…RLKDAGIDVT (123 aa)) form the CMP/dCMP-type deaminase domain. Position 121 (H121) interacts with Zn(2+). The Proton donor role is filled by E123. Zn(2+) contacts are provided by C146 and C155.

Zn(2+) is required as a cofactor.

It localises to the plastid. The protein localises to the chloroplast. The enzyme catalyses 2,5-diamino-6-hydroxy-4-(5-phosphoribosylamino)-pyrimidine + H2O + H(+) = 5-amino-6-(5-phospho-D-ribosylamino)uracil + NH4(+). It participates in cofactor biosynthesis; riboflavin biosynthesis; 5-amino-6-(D-ribitylamino)uracil from GTP: step 2/4. Its function is as follows. Monofunctional pyrimidine deaminase involved in the riboflavin biosynthesis pathway. Also has a reductase domain that lacks catalytically essential substrate-binding residues. The sequence is that of Riboflavin biosynthesis protein PYRD, chloroplastic (PYRD) from Arabidopsis thaliana (Mouse-ear cress).